Here is a 399-residue protein sequence, read N- to C-terminus: Cytohesin-3 (399 aa).

A coiled-coil region spans residues 14 to 61 (EDLSLEEREELLDIRRRKKELIDDIERLKYEIAEVMTEIDNLTSVEES). The 130-residue stretch at 77–206 (FNMDPKKGIQ…IIMLNTSLHN (130 aa)) folds into the SEC7 domain. The 117-residue stretch at 264–380 (NPDREGWLLK…WMKSIKASIS (117 aa)) folds into the PH domain. A 1,2-diacyl-sn-glycero-3-phospho-(1D-myo-inositol-3,4,5-trisphosphate) is bound by residues 273-280 (KLGGRVKT), R284, Y295, R305, and N354. Residues 391–399 (RKRRIANKK) are C-terminal autoinhibitory region.

Interacts with TAMALIN. Interacts with FRMD4A. Interacts with FRMD4B.

It localises to the cytoplasm. The protein resides in the cytosol. Its subcellular location is the cell membrane. It is found in the cell junction. The protein localises to the adherens junction. It localises to the tight junction. In terms of biological role, promotes guanine-nucleotide exchange on ARF1. Promotes the activation of ARF factors through replacement of GDP with GTP. Plays a role in the epithelial polarization. The protein is Cytohesin-3 (Cyth3) of Mus musculus (Mouse).